Consider the following 334-residue polypeptide: Glycerol-1-phosphate dehydrogenase [NAD(P)+] (334 aa).

Residues 77–81 and 99–102 each bind NAD(+); these read GRPID and TTAS. Aspartate 104 serves as a coordination point for substrate. Serine 108 contacts NAD(+). Aspartate 147 is a binding site for substrate. Positions 147 and 225 each coordinate Zn(2+). Residue histidine 229 participates in substrate binding. A Zn(2+)-binding site is contributed by histidine 246.

The protein belongs to the glycerol-1-phosphate dehydrogenase family. Zn(2+) serves as cofactor.

It is found in the cytoplasm. It catalyses the reaction sn-glycerol 1-phosphate + NAD(+) = dihydroxyacetone phosphate + NADH + H(+). The enzyme catalyses sn-glycerol 1-phosphate + NADP(+) = dihydroxyacetone phosphate + NADPH + H(+). The protein operates within membrane lipid metabolism; glycerophospholipid metabolism. Its function is as follows. Catalyzes the NAD(P)H-dependent reduction of dihydroxyacetonephosphate (DHAP or glycerone phosphate) to glycerol 1-phosphate (G1P). The G1P thus generated is used as the glycerophosphate backbone of phospholipids in the cellular membranes of Archaea. This Methanococcus maripaludis (strain DSM 14266 / JCM 13030 / NBRC 101832 / S2 / LL) protein is Glycerol-1-phosphate dehydrogenase [NAD(P)+].